Consider the following 316-residue polypeptide: Glutathione synthetase (316 aa).

An ATP-grasp domain is found at N124–E311. Residue F151–G208 participates in ATP binding. Residues E282 and N284 each contribute to the Mg(2+) site.

The protein belongs to the prokaryotic GSH synthase family. Requires Mg(2+) as cofactor. Mn(2+) is required as a cofactor.

The enzyme catalyses gamma-L-glutamyl-L-cysteine + glycine + ATP = glutathione + ADP + phosphate + H(+). The protein operates within sulfur metabolism; glutathione biosynthesis; glutathione from L-cysteine and L-glutamate: step 2/2. The protein is Glutathione synthetase of Xanthomonas axonopodis pv. citri (strain 306).